We begin with the raw amino-acid sequence, 300 residues long: Estradiol 17-beta-dehydrogenase 11 (300 aa).

Residues 1 to 19 (MKFLLDVLLLLPLLIVCSL) form the signal peptide. Residue 40–64 (LITGAGHGIGRLTAYEFAKLKSKLV) coordinates NADP(+). Substrate is bound at residue S172. Y185 acts as the Proton acceptor in catalysis.

It belongs to the short-chain dehydrogenases/reductases (SDR) family. 17-beta-HSD 3 subfamily.

It is found in the endoplasmic reticulum. The protein localises to the lipid droplet. The catalysed reaction is 17beta-estradiol + NAD(+) = estrone + NADH + H(+). It carries out the reaction 17beta-estradiol + NADP(+) = estrone + NADPH + H(+). Functionally, can convert androstan-3-alpha,17-beta-diol (3-alpha-diol) to androsterone in vitro, suggesting that it may participate in androgen metabolism during steroidogenesis. May act by metabolizing compounds that stimulate steroid synthesis and/or by generating metabolites that inhibit it. Has no activity toward DHEA (dehydroepiandrosterone), or A-dione (4-androste-3,17-dione), and only a slight activity toward testosterone to A-dione. This is Estradiol 17-beta-dehydrogenase 11 (HSD17B11) from Pongo abelii (Sumatran orangutan).